The sequence spans 367 residues: Glutamate 5-kinase (367 aa).

Position 10 (Lys-10) interacts with ATP. Positions 50, 137, and 149 each coordinate substrate. ATP contacts are provided by residues 169 to 170 and 211 to 217; these read TD and TGGMSTK. In terms of domain architecture, PUA spans 275 to 353; sequence AGEITVDEGA…QQIDAILGYE (79 aa).

Belongs to the glutamate 5-kinase family.

The protein localises to the cytoplasm. The enzyme catalyses L-glutamate + ATP = L-glutamyl 5-phosphate + ADP. Its pathway is amino-acid biosynthesis; L-proline biosynthesis; L-glutamate 5-semialdehyde from L-glutamate: step 1/2. Catalyzes the transfer of a phosphate group to glutamate to form L-glutamate 5-phosphate. The sequence is that of Glutamate 5-kinase from Salmonella agona (strain SL483).